We begin with the raw amino-acid sequence, 500 residues long: UDP-GalNAc:beta-1,3-N-acetylgalactosaminyltransferase 2 (500 aa).

Residues 1 to 6 lie on the Cytoplasmic side of the membrane; that stretch reads MRNWLV. A helical; Signal-anchor for type II membrane protein membrane pass occupies residues 7–23; the sequence is LLCPCVLGAALHLWLRL. Topologically, residues 24-500 are lumenal; that stretch reads RSPPPACASG…CGDPCRCQAR (477 aa). Residues Asn-116 and Asn-174 are each glycosylated (N-linked (GlcNAc...) asparagine).

This sequence belongs to the glycosyltransferase 31 family. Post-translationally, N-glycosylated. Expressed in all tissues examined, but at highest levels in testis, adipose tissue, skeletal muscle and ovary.

It is found in the golgi apparatus membrane. The protein resides in the endoplasmic reticulum. It catalyses the reaction 3-O-(N-acetyl-beta-D-glucosaminyl-(1-&gt;4)-alpha-D-mannosyl)-L-threonyl-[protein] + UDP-N-acetyl-alpha-D-galactosamine = 3-O-[beta-D-GalNAc-(1-&gt;3)-beta-D-GlcNAc-(1-&gt;4)-alpha-D-Man]-L-Thr-[protein] + UDP + H(+). Its pathway is protein modification; protein glycosylation. Functionally, beta-1,3-N-acetylgalactosaminyltransferase that synthesizes a unique carbohydrate structure, GalNAc-beta-1-3GlcNAc, on N- and O-glycans. Has no galactose nor galactosaminyl transferase activity toward any acceptor substrate. Involved in alpha-dystroglycan (DAG1) glycosylation: acts coordinately with GTDC2/POMGnT2 to synthesize a GalNAc-beta3-GlcNAc-beta-terminus at the 4-position of protein O-mannose in the biosynthesis of the phosphorylated O-mannosyl trisaccharide (N-acetylgalactosamine-beta-3-N-acetylglucosamine-beta-4-(phosphate-6-)mannose), a carbohydrate structure present in alpha-dystroglycan, which is required for binding laminin G-like domain-containing extracellular proteins with high affinity. The chain is UDP-GalNAc:beta-1,3-N-acetylgalactosaminyltransferase 2 (B3GALNT2) from Homo sapiens (Human).